A 90-amino-acid chain; its full sequence is Acyl-CoA-binding protein homolog (90 aa).

Residues leucine 3–leucine 89 enclose the ACB domain. An acyl-CoA-binding positions include arginine 15, tyrosine 30–lysine 34, lysine 53, lysine 57, and tyrosine 76.

Belongs to the ACBP family.

Binds medium- and long-chain acyl-CoA esters with very high affinity and may function as an intracellular carrier of acyl-CoA esters. The protein is Acyl-CoA-binding protein homolog of Manduca sexta (Tobacco hawkmoth).